Reading from the N-terminus, the 506-residue chain is FAD-linked oxidoreductase chry5 (506 aa).

The N-terminal stretch at 1–17 is a signal peptide; sequence MHLQALTGLATLAVTAA. The region spanning 59 to 241 is the FAD-binding PCMH-type domain; sequence LDKPTVNIVA…TSVTSKTYDA (183 aa). 5 N-linked (GlcNAc...) asparagine glycosylation sites follow: asparagine 205, asparagine 272, asparagine 281, asparagine 389, and asparagine 431.

This sequence belongs to the oxygen-dependent FAD-linked oxidoreductase family. FAD serves as cofactor.

The protein operates within pigment biosynthesis. Its function is as follows. FAD-linked oxidoreductase; part of the gene cluster that mediates the biosynthesis of the yellow pigment chrysogine. Pyruvic acid and anthranilic acid are likely substrates for the nonribosomal peptide synthetase chry1/NRPS14, with pyruvic acid adenylated by the first A domain and anthranilic acid by the second. If pyruvic acid and anthranilic acid are merged and released from chry1/NRPS14 by hydrolysis, a subsequent amidation would lead to 2-pyruvoylaminobenzamide. This process is probably catalyzed by the amidotransferase chry2 using glutamine as amino donor. The dehydrogenase chry5 that has a terminal berberine bridge domain for C-N cyclization could catalyze the cyclization of 2-pyruvoylaminobenzamide to yield acetyl-4(3H)-quinazolidinone. A final reduction of acetyl-4(3H)-quinazolidinone catalyzed by the oxidoreductase chry4 would result in chrysogine. The chain is FAD-linked oxidoreductase chry5 from Gibberella zeae (strain ATCC MYA-4620 / CBS 123657 / FGSC 9075 / NRRL 31084 / PH-1) (Wheat head blight fungus).